The primary structure comprises 755 residues: ABC transporter G family member 2 (755 aa).

One can recognise an ABC transporter domain in the interval 98 to 358; that stretch reads LSFTDLTYSV…FSEFKHPIPE (261 aa). Residue 151–158 coordinates ATP; that stretch reads GASGSGKS. The ABC transmembrane type-2 domain occupies 449–659; that stretch reads IEMIVIGKRA…PYEGVLQNEF (211 aa). 6 helical membrane passes run 468–488, 503–523, 552–572, 579–599, 609–629, and 728–748; these read LLGMRLGAVMVTGIILATMFT, FFAFAMSTTFYTCAEAIPVFL, IPALIVLSASFAATTFWAVGL, FFFFYFTILASFWAGSSFVTF, LGFTVVVAILAYFLLFSGFFI, and LWITVAWGFFFRVLFYFTLLI.

Belongs to the ABC transporter superfamily. ABCG family. Eye pigment precursor importer (TC 3.A.1.204) subfamily.

The protein localises to the membrane. This Arabidopsis thaliana (Mouse-ear cress) protein is ABC transporter G family member 2 (ABCG2).